The sequence spans 250 residues: Putative B3 domain-containing protein At4g03170 (250 aa).

Residues 1-12 (MANSTGKPTSST) show a composition bias toward polar residues. A disordered region spans residues 1–90 (MANSTGKPTS…EKNQPKRFKK (90 aa)). Acidic residues predominate over residues 34–56 (DREEDIDDEDDIDDEVIDDEDYE). Positions 72 to 84 (QSREREEETEKNQ) are enriched in basic and acidic residues. Residues 137–245 (KKQLMSSDVD…KLCFAIHYVK (109 aa)) constitute a DNA-binding region (TF-B3).

The protein localises to the nucleus. In Arabidopsis thaliana (Mouse-ear cress), this protein is Putative B3 domain-containing protein At4g03170.